A 288-amino-acid polypeptide reads, in one-letter code: Serine/threonine-protein acetyltransferase YopJ (288 aa).

Catalysis depends on residues His-109 and Glu-128. Residue His-109 participates in CoA binding. Position 167–168 (167–168 (RS)) interacts with CoA. Cys-172 is a catalytic residue. Residues 182-185 (KLYI) and 224-225 (KH) contribute to the 1D-myo-inositol hexakisphosphate site. A CoA-binding site is contributed by 227-230 (QGKK). Arg-257 contributes to the 1D-myo-inositol hexakisphosphate binding site. 266–270 (DGKEL) provides a ligand contact to CoA.

Belongs to the acetyltransferase YopJ family. Requires 1D-myo-inositol hexakisphosphate as cofactor.

Its subcellular location is the secreted. The enzyme catalyses L-threonyl-[protein] + acetyl-CoA = O-acetyl-L-threonyl-[protein] + CoA. The catalysed reaction is L-seryl-[protein] + acetyl-CoA = O-acetyl-L-seryl-[protein] + CoA. With respect to regulation, 1D-myo-inositol hexakisphosphate activates protein-acetyltransferase activity via an allosteric mechanism: 1D-myo-inositol hexakisphosphate-binding induces a conformational rearrangement that stimulates the interaction with acetyl-CoA. Serine/threonine-protein acetyltransferase translocated into infected cells, which inhibits the host immune response and induces cell death by mediating acetylation of target proteins. Inhibits the MAPK and NF-kappa-B signaling pathways by acetylating protein-kinases such as MAP2K1, MAP2K6, MAP3K7/TAK1 and I-kappa-B kinase (CHUK/IKKA and IKBKB) on serine and threonine residues critical for their activation by phosphorylation, thereby preventing protein-kinase activation. Promotes pyroptosis, a programmed cell death, in host cells by mediating acetylation of MAP3K7/TAK1: MAP3K7/TAK1 inactivation triggers activation of caspase-8 (CASP8), followed by CASP8-dependent cleavage of gasdermin-D (GSDMD) and induction of pyroptosis. Also able to induce intestinal barrier dysfunction by acetylating and inhibiting host protein-kinases RIPK2/RICK and MAP3K7/TAK1, thereby promoting cell death. This is Serine/threonine-protein acetyltransferase YopJ from Yersinia pseudotuberculosis serotype I (strain IP32953).